The following is a 226-amino-acid chain: Uracil-DNA glycosylase (226 aa).

Catalysis depends on aspartate 64, which acts as the Proton acceptor.

It belongs to the uracil-DNA glycosylase (UDG) superfamily. UNG family.

It is found in the cytoplasm. It catalyses the reaction Hydrolyzes single-stranded DNA or mismatched double-stranded DNA and polynucleotides, releasing free uracil.. Functionally, excises uracil residues from the DNA which can arise as a result of misincorporation of dUMP residues by DNA polymerase or due to deamination of cytosine. The polypeptide is Uracil-DNA glycosylase (Photorhabdus laumondii subsp. laumondii (strain DSM 15139 / CIP 105565 / TT01) (Photorhabdus luminescens subsp. laumondii)).